The following is a 125-amino-acid chain: Egg cell-secreted protein 1.2 (125 aa).

Residues 1-22 (MASNTSFLFATIAILLVLNISG) form the signal peptide.

This sequence belongs to the plant egg cell-secreted peptide family. Restricted to female reproductive tissues, specifically accumulating in storage vesicles of the unfertilized egg cell.

The protein localises to the cytoplasmic vesicle. It localises to the secreted. Involved in the regulation of gamete interactions during the double fertilization and to prevent multiple-pollen tube attraction; mediates the redistribution of the gamete fusogen HAP2/GCS1 to the cell surface after secretion upon sperm arrival. The protein is Egg cell-secreted protein 1.2 (EC1.2) of Arabidopsis thaliana (Mouse-ear cress).